A 217-amino-acid polypeptide reads, in one-letter code: Large ribosomal subunit protein uL1 (217 aa).

Belongs to the universal ribosomal protein uL1 family. As to quaternary structure, component of the large ribosomal subunit (LSU). Mature N.crassa ribosomes consist of a small (40S) and a large (60S) subunit. The 40S small subunit contains 1 molecule of ribosomal RNA (18S rRNA) and at least 32 different proteins. The large 60S subunit contains 3 rRNA molecules (26S, 5.8S and 5S rRNA) and at least 42 different proteins. uL1 forms part of the L1 stalk.

The protein localises to the cytoplasm. In terms of biological role, component of the ribosome, a large ribonucleoprotein complex responsible for the synthesis of proteins in the cell. The small ribosomal subunit (SSU) binds messenger RNAs (mRNAs) and translates the encoded message by selecting cognate aminoacyl-transfer RNA (tRNA) molecules. The large subunit (LSU) contains the ribosomal catalytic site termed the peptidyl transferase center (PTC), which catalyzes the formation of peptide bonds, thereby polymerizing the amino acids delivered by tRNAs into a polypeptide chain. The nascent polypeptides leave the ribosome through a tunnel in the LSU and interact with protein factors that function in enzymatic processing, targeting, and the membrane insertion of nascent chains at the exit of the ribosomal tunnel. uL1 forms part of the L1 stalk, a mobile element that plays a role in evacuating the exit-site tRNA. The chain is Large ribosomal subunit protein uL1 (crp-74) from Neurospora crassa (strain ATCC 24698 / 74-OR23-1A / CBS 708.71 / DSM 1257 / FGSC 987).